The chain runs to 324 residues: MNLRKDKVVQSTDGDALSSKYSAVQKGYLQDEFIDLFVAGSKQAAAQQGPGSARKVVAQFQPKLPLINRGTFVRHHAIDVLVDRFLAAKKPGQRVQIISLGAGSDTRPFSLWSSKPENRDEILYHEIDFAVSVERKRDIIMQDSTLRELVGAQEYDKTTGMHTQRYHLHGIDLRSIGPGFVLPGSDPSLATLIISECCLCYLEPDQAKQVIFWITSEFTNSTIVMYEPLSGQDQFGQVMIENLASRGISIPSMTKFPSLESQIERFKAAGYTEVLATSMDVIHDEWLSPEEQQRIHGLEFLDEREELLLLLKHYCVVWASNLTK.

Residues Arg74, Gly101, Asp128, 172 to 173 (DL), and Glu196 contribute to the S-adenosyl-L-methionine site.

This sequence belongs to the methyltransferase superfamily. LCMT family.

It catalyses the reaction [phosphatase 2A protein]-C-terminal L-leucine + S-adenosyl-L-methionine = [phosphatase 2A protein]-C-terminal L-leucine methyl ester + S-adenosyl-L-homocysteine. Methylates the carboxyl group of the C-terminal leucine residue of protein phosphatase 2A catalytic subunits to form alpha-leucine ester residues. The chain is Leucine carboxyl methyltransferase 1 (PPM1) from Yarrowia lipolytica (strain CLIB 122 / E 150) (Yeast).